Here is a 78-residue protein sequence, read N- to C-terminus: UPF0270 protein YPO0179/y3960/YP_0178 (78 aa).

Belongs to the UPF0270 family.

This chain is UPF0270 protein YPO0179/y3960/YP_0178, found in Yersinia pestis.